The primary structure comprises 63 residues: Large ribosomal subunit protein bL35 (63 aa).

The protein belongs to the bacterial ribosomal protein bL35 family.

The chain is Large ribosomal subunit protein bL35 from Campylobacter jejuni subsp. doylei (strain ATCC BAA-1458 / RM4099 / 269.97).